The chain runs to 379 residues: Queuine tRNA-ribosyltransferase (379 aa).

D94 functions as the Proton acceptor in the catalytic mechanism. Residues 94-98 (DSGGF), D148, Q191, and G218 each bind substrate. The interval 249–255 (GVGSPDA) is RNA binding. Catalysis depends on D268, which acts as the Nucleophile. Residues 273–277 (TRIAR) form an RNA binding; important for wobble base 34 recognition region. Zn(2+)-binding residues include C306, C308, C311, and H337.

Belongs to the queuine tRNA-ribosyltransferase family. In terms of assembly, homodimer. Within each dimer, one monomer is responsible for RNA recognition and catalysis, while the other monomer binds to the replacement base PreQ1. The cofactor is Zn(2+).

The catalysed reaction is 7-aminomethyl-7-carbaguanine + guanosine(34) in tRNA = 7-aminomethyl-7-carbaguanosine(34) in tRNA + guanine. It functions in the pathway tRNA modification; tRNA-queuosine biosynthesis. Catalyzes the base-exchange of a guanine (G) residue with the queuine precursor 7-aminomethyl-7-deazaguanine (PreQ1) at position 34 (anticodon wobble position) in tRNAs with GU(N) anticodons (tRNA-Asp, -Asn, -His and -Tyr). Catalysis occurs through a double-displacement mechanism. The nucleophile active site attacks the C1' of nucleotide 34 to detach the guanine base from the RNA, forming a covalent enzyme-RNA intermediate. The proton acceptor active site deprotonates the incoming PreQ1, allowing a nucleophilic attack on the C1' of the ribose to form the product. After dissociation, two additional enzymatic reactions on the tRNA convert PreQ1 to queuine (Q), resulting in the hypermodified nucleoside queuosine (7-(((4,5-cis-dihydroxy-2-cyclopenten-1-yl)amino)methyl)-7-deazaguanosine). This chain is Queuine tRNA-ribosyltransferase, found in Staphylococcus aureus (strain Mu3 / ATCC 700698).